A 491-amino-acid chain; its full sequence is MASTAAAASSQGCISWALRQRGLGGGGARAVPVLPRRRFCVSAAAGAGFDNENREYVIVGGGNAAGYAARTFVEHGMADGRLCIVSKEAYPPYERPALTKGYLFPPDKKPARLPGFHTCVGSGGQRQTAEWYKENGIEVLYEDPVVAFDGKTHTLKTSSGKILKYGSLIISTGCEASRLPAKIGGNLPGVHYIRDVADADSLVSSLGKAKKIVVIGGGYIGMEVAAAACGWNLDTTIIFPEDHIMPRLFTPSLAKKYEELYQQNGVKFIKGALIDKLEAGSDGRVSSAVLEDGSVVEADTVIVGIGARPVIGPFEAVGVNTKVGGIEVDSLFRTSIPGIFAIGDVAAFPLKMYDRMTRVEHVDHARKSAHHCVEALLTSHTKPYDYLPYFYSRVFEYEGSSRKIWWQFYGDNVGETIEVGSFEPKIATFWIDSDSRLKGVFLESGSSEEFSLLPQLAKSQPVVDKAKLKSATSVEDALEIARSSLHSGSSV.

The transit peptide at 1–42 (MASTAAAASSQGCISWALRQRGLGGGGARAVPVLPRRRFCVS) directs the protein to the chloroplast. Residues 61–64 (GGNA), E88, R95, K100, and 194–195 (RD) each bind FAD. Residues 217–223 (GGYIGME), E241, R247, and G306 contribute to the NAD(+) site. 219–223 (YIGME) lines the NADP(+) pocket. Residues R247 and G306 each coordinate NADP(+). D344 contacts FAD. 360 to 361 (EH) serves as a coordination point for NAD(+). 360 to 361 (EH) lines the NADP(+) pocket. V362 lines the FAD pocket. R366 is an L-ascorbate binding site. Position 391 (Y391) interacts with FAD. Y391 serves as a coordination point for NAD(+). Y391 serves as a coordination point for NADP(+). L-ascorbate is bound at residue R393.

The protein belongs to the FAD-dependent oxidoreductase family. FAD is required as a cofactor.

The protein localises to the plastid. The protein resides in the chloroplast. It carries out the reaction 2 monodehydro-L-ascorbate radical + NADH + H(+) = 2 L-ascorbate + NAD(+). Catalyzes the conversion of monodehydroascorbate to ascorbate, oxidizing NADH in the process. Ascorbate is a major antioxidant against reactive oxygen species (ROS) and nitric oxide (NO). This is Monodehydroascorbate reductase 5, chlorplastic from Oryza sativa subsp. japonica (Rice).